We begin with the raw amino-acid sequence, 441 residues long: Zinc finger protein ZIC 3 (441 aa).

The C2H2-type 1; atypical zinc-finger motif lies at 222 to 257 (LSCKWLEESTMNHPQKTCDRTFSSMHELVTHMTMEH). The C2H2-type 2; atypical zinc-finger motif lies at 266 to 293 (HICYWEECPRGGKSFKAKYKLVNHIRVH). 3 consecutive C2H2-type zinc fingers follow at residues 299-323 (FPCPFPGCGKIFARSENLKIHKRTH), 329-353 (FKCEFEGCDRRFANSSDRKKHMHVH), and 359-381 (YICKVCDKSYTHPSSLRKHMKVH). Residues 375–441 (RKHMKVHESQ…LPPNFNEWYV (67 aa)) are disordered. The span at 383 to 399 (SQGSDSSPAASSGYESA) shows a compositional bias: low complexity. Over residues 406–429 (SANSEEPSKNSSATHQTNNNSHNT) the composition is skewed to polar residues.

This sequence belongs to the GLI C2H2-type zinc-finger protein family. First detected at early gastrula (stage 10.25) in the dorsal lip and prospective neural plate. Also expressed in the mesoderm at early gastrulation, with expression strongest on the dorsal side. Mesodermal expression continues at stage 12 but is hardly detectable after stage 14. As gastrulation proceeds, expression decreases in the dorsal lip and increases in the prospective neural plate. At the neural plate stage (stage 14), expressed strongly in the prospective mesencephalon and anterior rhombencephalon, after which expression becomes stronger in the anterior neural folds. At early tailbud stage (stage 20), expression becomes restricted to the dorsal region of forebrain, midbrain and hindbrain, and weakly to the dorsal trunk. After mid-tailbud stage, expression decreases in the diencephalon, appears in the lateral mesoderm of the tailbud region and becomes restricted in the dorsal part of the neural tube.

It is found in the nucleus. Its subcellular location is the cytoplasm. Probably acts as a transcriptional activator. May bind to the minimal GLI-consensus sequence 5'-GGGTGGTC-3'. Can determine the ectodermal cell fate and promote the earliest step of neural and neural crest development. Involved in establishing left-right asymmetry in the embryo. This Xenopus laevis (African clawed frog) protein is Zinc finger protein ZIC 3 (zic3).